We begin with the raw amino-acid sequence, 853 residues long: DNA mismatch repair protein MutS (853 aa).

Position 614 to 621 (614 to 621 (GPNMGGKS)) interacts with ATP.

It belongs to the DNA mismatch repair MutS family.

Functionally, this protein is involved in the repair of mismatches in DNA. It is possible that it carries out the mismatch recognition step. This protein has a weak ATPase activity. The polypeptide is DNA mismatch repair protein MutS (Cronobacter sakazakii (strain ATCC BAA-894) (Enterobacter sakazakii)).